A 360-amino-acid chain; its full sequence is Phenylalanine--tRNA ligase alpha subunit (360 aa).

Glutamate 255 contributes to the Mg(2+) binding site.

This sequence belongs to the class-II aminoacyl-tRNA synthetase family. Phe-tRNA synthetase alpha subunit type 1 subfamily. In terms of assembly, tetramer of two alpha and two beta subunits. The cofactor is Mg(2+).

The protein resides in the cytoplasm. The catalysed reaction is tRNA(Phe) + L-phenylalanine + ATP = L-phenylalanyl-tRNA(Phe) + AMP + diphosphate + H(+). The polypeptide is Phenylalanine--tRNA ligase alpha subunit (Rhizorhabdus wittichii (strain DSM 6014 / CCUG 31198 / JCM 15750 / NBRC 105917 / EY 4224 / RW1) (Sphingomonas wittichii)).